Reading from the N-terminus, the 199-residue chain is NADH-quinone oxidoreductase subunit C (199 aa).

Belongs to the complex I 30 kDa subunit family. As to quaternary structure, NDH-1 is composed of 14 different subunits. Subunits NuoB, C, D, E, F, and G constitute the peripheral sector of the complex.

The protein localises to the cell inner membrane. The catalysed reaction is a quinone + NADH + 5 H(+)(in) = a quinol + NAD(+) + 4 H(+)(out). NDH-1 shuttles electrons from NADH, via FMN and iron-sulfur (Fe-S) centers, to quinones in the respiratory chain. The immediate electron acceptor for the enzyme in this species is believed to be ubiquinone. Couples the redox reaction to proton translocation (for every two electrons transferred, four hydrogen ions are translocated across the cytoplasmic membrane), and thus conserves the redox energy in a proton gradient. The polypeptide is NADH-quinone oxidoreductase subunit C (Rhodobacter capsulatus (Rhodopseudomonas capsulata)).